The following is a 410-amino-acid chain: Cysteine desulfurase IscS (410 aa).

Pyridoxal 5'-phosphate contacts are provided by residues 80 to 81, asparagine 160, glutamine 188, and 208 to 210; these read AT and SGH. Lysine 211 carries the N6-(pyridoxal phosphate)lysine modification. Pyridoxal 5'-phosphate is bound at residue threonine 248. The active-site Cysteine persulfide intermediate is the cysteine 334. Residue cysteine 334 coordinates [2Fe-2S] cluster.

This sequence belongs to the class-V pyridoxal-phosphate-dependent aminotransferase family. NifS/IscS subfamily. As to quaternary structure, homodimer. Forms a heterotetramer with IscU, interacts with other sulfur acceptors. Requires pyridoxal 5'-phosphate as cofactor.

It is found in the cytoplasm. It carries out the reaction (sulfur carrier)-H + L-cysteine = (sulfur carrier)-SH + L-alanine. It functions in the pathway cofactor biosynthesis; iron-sulfur cluster biosynthesis. In terms of biological role, master enzyme that delivers sulfur to a number of partners involved in Fe-S cluster assembly, tRNA modification or cofactor biosynthesis. Catalyzes the removal of elemental sulfur atoms from cysteine to produce alanine. Functions as a sulfur delivery protein for Fe-S cluster synthesis onto IscU, an Fe-S scaffold assembly protein, as well as other S acceptor proteins. The chain is Cysteine desulfurase IscS from Rickettsia africae (strain ESF-5).